The chain runs to 406 residues: Argininosuccinate synthase (406 aa).

Residues Ala-14–Ser-22 and Ala-41 each bind ATP. Positions 92 and 97 each coordinate L-citrulline. Gly-122 provides a ligand contact to ATP. 3 residues coordinate L-aspartate: Thr-124, Asn-128, and Asp-129. Asn-128 is an L-citrulline binding site. Residues Arg-132, Ser-181, Ser-190, Glu-266, and Tyr-278 each contribute to the L-citrulline site.

The protein belongs to the argininosuccinate synthase family. Type 1 subfamily. Homotetramer.

It is found in the cytoplasm. The enzyme catalyses L-citrulline + L-aspartate + ATP = 2-(N(omega)-L-arginino)succinate + AMP + diphosphate + H(+). The protein operates within amino-acid biosynthesis; L-arginine biosynthesis; L-arginine from L-ornithine and carbamoyl phosphate: step 2/3. In Geobacter metallireducens (strain ATCC 53774 / DSM 7210 / GS-15), this protein is Argininosuccinate synthase.